We begin with the raw amino-acid sequence, 528 residues long: uncharacterized protein (528 aa).

The tract at residues 1 to 51 is disordered; that stretch reads MEHPKRPTPKNEALHIDASGRGESSFSVHRSHSGGHEPFAPSPGSSIGASV. A run of 2 repeats spans residues 185 to 213 and 285 to 313. The 2 X 29 AA repeats stretch occupies residues 185–313; it reads EQEEEYISNS…EEKRKLQQAL (129 aa). Disordered stretches follow at residues 467–497 and 509–528; these read RAHG…NNDT and TVHP…DSHY. Residues 472–496 are compositionally biased toward polar residues; the sequence is SPPTVVVQPSTSRAGSNSTANINND.

This is an uncharacterized protein from Caenorhabditis elegans.